Here is a 240-residue protein sequence, read N- to C-terminus: 1-acyl-sn-glycerol-3-phosphate acyltransferase (240 aa).

Positions 73 to 78 (HQNNYD) match the HXXXXD motif motif.

It belongs to the 1-acyl-sn-glycerol-3-phosphate acyltransferase family.

The protein localises to the cell inner membrane. It catalyses the reaction a 1-acyl-sn-glycero-3-phosphate + an acyl-CoA = a 1,2-diacyl-sn-glycero-3-phosphate + CoA. It functions in the pathway phospholipid metabolism; CDP-diacylglycerol biosynthesis; CDP-diacylglycerol from sn-glycerol 3-phosphate: step 2/3. Its function is as follows. Converts lysophosphatidic acid (LPA) into phosphatidic acid by incorporating acyl moiety at the 2 position. The chain is 1-acyl-sn-glycerol-3-phosphate acyltransferase (plsC) from Haemophilus influenzae (strain ATCC 51907 / DSM 11121 / KW20 / Rd).